The primary structure comprises 180 residues: Thiol:disulfide interchange protein TxlA homolog (180 aa).

A helical transmembrane segment spans residues 10 to 26 (LLAVVAIALSAAVYLGF). The Thioredoxin domain maps to 34–143 (SLEAQAQRAI…LEQNITALVA (110 aa)). Cys64 and Cys67 are joined by a disulfide.

Belongs to the thioredoxin family.

Its subcellular location is the cell membrane. In terms of biological role, required for disulfide bond formation in some proteins. Acts by transferring its disulfide bond to other proteins and is reduced in the process. The chain is Thiol:disulfide interchange protein TxlA homolog (txlA) from Synechocystis sp. (strain ATCC 27184 / PCC 6803 / Kazusa).